The sequence spans 206 residues: Large ribosomal subunit protein uL4 (206 aa).

Residues 44-87 (KRQGTQKAKTRSEVRGGGRKPWRQKGTGHARQGSTRSPQWTGGG) form a disordered region. Residues 60-71 (GGRKPWRQKGTG) show a composition bias toward basic residues.

Belongs to the universal ribosomal protein uL4 family. As to quaternary structure, part of the 50S ribosomal subunit.

In terms of biological role, one of the primary rRNA binding proteins, this protein initially binds near the 5'-end of the 23S rRNA. It is important during the early stages of 50S assembly. It makes multiple contacts with different domains of the 23S rRNA in the assembled 50S subunit and ribosome. Forms part of the polypeptide exit tunnel. This Agathobacter rectalis (strain ATCC 33656 / DSM 3377 / JCM 17463 / KCTC 5835 / VPI 0990) (Eubacterium rectale) protein is Large ribosomal subunit protein uL4.